Reading from the N-terminus, the 1224-residue chain is DNA-directed RNA polymerase subunit beta'' (1224 aa).

C233, C308, C315, and C318 together coordinate Zn(2+).

This sequence belongs to the RNA polymerase beta' chain family. RpoC2 subfamily. In terms of assembly, in plastids the minimal PEP RNA polymerase catalytic core is composed of four subunits: alpha, beta, beta', and beta''. When a (nuclear-encoded) sigma factor is associated with the core the holoenzyme is formed, which can initiate transcription. Zn(2+) serves as cofactor.

It localises to the plastid. The protein localises to the chloroplast. It carries out the reaction RNA(n) + a ribonucleoside 5'-triphosphate = RNA(n+1) + diphosphate. Functionally, DNA-dependent RNA polymerase catalyzes the transcription of DNA into RNA using the four ribonucleoside triphosphates as substrates. This is DNA-directed RNA polymerase subunit beta'' from Pinus thunbergii (Japanese black pine).